The sequence spans 329 residues: GTP 3',8-cyclase 1 (329 aa).

A Radical SAM core domain is found at Gly-7–Pro-230. Arg-16 lines the GTP pocket. [4Fe-4S] cluster contacts are provided by Cys-23 and Cys-27. Position 29 (Tyr-29) interacts with S-adenosyl-L-methionine. Cys-30 serves as a coordination point for [4Fe-4S] cluster. A GTP-binding site is contributed by Arg-65. An S-adenosyl-L-methionine-binding site is contributed by Gly-69. GTP is bound at residue Thr-96. Residue Ser-120 participates in S-adenosyl-L-methionine binding. A GTP-binding site is contributed by Lys-157. Met-191 is an S-adenosyl-L-methionine binding site. The [4Fe-4S] cluster site is built by Cys-255 and Cys-258. Residue Arg-260–Arg-262 coordinates GTP. Cys-272 contributes to the [4Fe-4S] cluster binding site.

It belongs to the radical SAM superfamily. MoaA family. As to quaternary structure, monomer and homodimer. It depends on [4Fe-4S] cluster as a cofactor.

The enzyme catalyses GTP + AH2 + S-adenosyl-L-methionine = (8S)-3',8-cyclo-7,8-dihydroguanosine 5'-triphosphate + 5'-deoxyadenosine + L-methionine + A + H(+). It participates in cofactor biosynthesis; molybdopterin biosynthesis. In terms of biological role, catalyzes the cyclization of GTP to (8S)-3',8-cyclo-7,8-dihydroguanosine 5'-triphosphate. In Pseudomonas aeruginosa (strain ATCC 15692 / DSM 22644 / CIP 104116 / JCM 14847 / LMG 12228 / 1C / PRS 101 / PAO1), this protein is GTP 3',8-cyclase 1 (moaA1).